The following is a 101-amino-acid chain: DNA-directed RNA polymerase subunit beta (101 aa).

Residues 74–101 are disordered; it reads KRRLSALGPGGLSRERAGLEVRDVHSSH. The segment covering 86 to 101 has biased composition (basic and acidic residues); that stretch reads SRERAGLEVRDVHSSH.

This sequence belongs to the RNA polymerase beta chain family. The RNAP catalytic core consists of 2 alpha, 1 beta, 1 beta' and 1 omega subunit. When a sigma factor is associated with the core the holoenzyme is formed, which can initiate transcription.

The enzyme catalyses RNA(n) + a ribonucleoside 5'-triphosphate = RNA(n+1) + diphosphate. DNA-dependent RNA polymerase catalyzes the transcription of DNA into RNA using the four ribonucleoside triphosphates as substrates. In Mycolicibacterium peregrinum (Mycobacterium peregrinum), this protein is DNA-directed RNA polymerase subunit beta (rpoB).